Consider the following 811-residue polypeptide: Protein VAC14 homolog (811 aa).

7 HEAT repeats span residues Asp-81 to Gly-119, Phe-122 to Gln-160, Ile-240 to Lys-278, Gln-334 to Lys-372, Leu-375 to Lys-412, Ser-431 to Gly-469, and Ile-472 to Ser-510. Residues Thr-775 to Ser-785 show a composition bias toward low complexity. A disordered region spans residues Thr-775 to Gln-811.

This sequence belongs to the VAC14 family. As to quaternary structure, component of the PI(3,5)P2 regulatory complex, composed of ATG18, FIG4, FAB1, VAC14 and VAC7. VAC14 nucleates the assembly of the complex and serves as a scaffold.

The protein resides in the cytoplasm. The protein localises to the vacuole membrane. In terms of biological role, the PI(3,5)P2 regulatory complex regulates both the synthesis and turnover of phosphatidylinositol 3,5-bisphosphate (PtdIns(3,5)P2). Regulates the synthesis of PtdIns(3,5)P2 by positive activation of FAB1 and by controlling FIG4 localization. The sequence is that of Protein VAC14 homolog from Schizosaccharomyces pombe (strain 972 / ATCC 24843) (Fission yeast).